The sequence spans 230 residues: Ion-translocating oxidoreductase complex subunit E (230 aa).

The next 6 helical transmembrane spans lie at 18–38 (ALVQLLGLCPLLAVTSTATNA), 39–59 (LGLGLATTLVLTLTNLTVSAL), 63–83 (TPAEIRIPIYVMIIASVVSAV), 86–106 (LINAYAFGLYQSLGIFIPLIV), 125–145 (WLSALDGFSIGMGATGAMFVL), and 182–202 (PFLLARLPPGAFIGLGLMLAV).

This sequence belongs to the NqrDE/RnfAE family. The complex is composed of six subunits: RsxA, RsxB, RsxC, RsxD, RsxE and RsxG.

Its subcellular location is the cell inner membrane. Functionally, part of a membrane-bound complex that couples electron transfer with translocation of ions across the membrane. Required to maintain the reduced state of SoxR. This is Ion-translocating oxidoreductase complex subunit E from Salmonella dublin (strain CT_02021853).